The chain runs to 685 residues: Putative lipase ROG1 (685 aa).

The Charge relay system role is filled by Ser269.

This sequence belongs to the putative lipase ROG1 family.

The polypeptide is Putative lipase ROG1 (ROG1) (Saccharomyces cerevisiae (strain ATCC 204508 / S288c) (Baker's yeast)).